A 34-amino-acid chain; its full sequence is MEVNILAFIATALFILVPTAFLLIIYVKTVSQND.

A helical membrane pass occupies residues 5–25 (ILAFIATALFILVPTAFLLII).

Belongs to the PsbM family. In terms of assembly, PSII is composed of 1 copy each of membrane proteins PsbA, PsbB, PsbC, PsbD, PsbE, PsbF, PsbH, PsbI, PsbJ, PsbK, PsbL, PsbM, PsbT, PsbX, PsbY, PsbZ, Psb30/Ycf12, at least 3 peripheral proteins of the oxygen-evolving complex and a large number of cofactors. It forms dimeric complexes.

It localises to the plastid. It is found in the chloroplast thylakoid membrane. One of the components of the core complex of photosystem II (PSII). PSII is a light-driven water:plastoquinone oxidoreductase that uses light energy to abstract electrons from H(2)O, generating O(2) and a proton gradient subsequently used for ATP formation. It consists of a core antenna complex that captures photons, and an electron transfer chain that converts photonic excitation into a charge separation. This subunit is found at the monomer-monomer interface. This Buxus microphylla (Littleleaf boxwood) protein is Photosystem II reaction center protein M.